The chain runs to 340 residues: MNNFDYYRDFDDFQRRETINFFLAKFPFASKAQLDVFLEQAKTAYVKLRTSNPKNVDWNQMLVLLLKKFGPEARSEKERLKRILSLQEQLKVRLEGEINRQVQQNSELFSQLKQSESEIIQMQQLVEAKEHQIEALNKQLHAIKEANKKLIEEHESINVEELLKEYEVQCNEAIYKRDQHIQTVFEDKLALKDGEISETQSLLKTAEKEKQALKKAYKLVVNSLQKHQKLTTEIEIDFTKLDEIIATIFDETKNPKTGFTNFIKQFEKTKAKLTKKIAEITKLDHSTPTNYQQETPASQQQLDQENEPIKPSKKSNSSSLPRGTTQPKSNSINRVSKLID.

The interval 284-340 (DHSTPTNYQQETPASQQQLDQENEPIKPSKKSNSSSLPRGTTQPKSNSINRVSKLID) is disordered. Composition is skewed to polar residues over residues 286–303 (STPTNYQQETPASQQQLD) and 320–334 (LPRGTTQPKSNSINR).

This is an uncharacterized protein from Mycoplasma genitalium (strain ATCC 33530 / DSM 19775 / NCTC 10195 / G37) (Mycoplasmoides genitalium).